The sequence spans 362 residues: Phosphoserine aminotransferase (362 aa).

L-glutamate is bound at residue Arg43. Pyridoxal 5'-phosphate is bound by residues Ala77–Arg78, Trp103, Thr153, Asp173, and Gln196. Lys197 carries the post-translational modification N6-(pyridoxal phosphate)lysine.

This sequence belongs to the class-V pyridoxal-phosphate-dependent aminotransferase family. SerC subfamily. As to quaternary structure, homodimer. It depends on pyridoxal 5'-phosphate as a cofactor.

The protein resides in the cytoplasm. It carries out the reaction O-phospho-L-serine + 2-oxoglutarate = 3-phosphooxypyruvate + L-glutamate. It catalyses the reaction 4-(phosphooxy)-L-threonine + 2-oxoglutarate = (R)-3-hydroxy-2-oxo-4-phosphooxybutanoate + L-glutamate. It participates in amino-acid biosynthesis; L-serine biosynthesis; L-serine from 3-phospho-D-glycerate: step 2/3. Its pathway is cofactor biosynthesis; pyridoxine 5'-phosphate biosynthesis; pyridoxine 5'-phosphate from D-erythrose 4-phosphate: step 3/5. In terms of biological role, catalyzes the reversible conversion of 3-phosphohydroxypyruvate to phosphoserine and of 3-hydroxy-2-oxo-4-phosphonooxybutanoate to phosphohydroxythreonine. The chain is Phosphoserine aminotransferase from Legionella pneumophila (strain Corby).